The sequence spans 174 residues: 3-hydroxyanthranilate 3,4-dioxygenase (174 aa).

An O2-binding site is contributed by Arg-47. Fe cation contacts are provided by His-51, Glu-57, and His-95. Glu-57 is a binding site for substrate. Arg-99 and Glu-110 together coordinate substrate. Fe cation-binding residues include Cys-125, Cys-128, Cys-162, and Cys-165.

This sequence belongs to the 3-HAO family. As to quaternary structure, homodimer. It depends on Fe(2+) as a cofactor.

It carries out the reaction 3-hydroxyanthranilate + O2 = (2Z,4Z)-2-amino-3-carboxymuconate 6-semialdehyde. The protein operates within cofactor biosynthesis; NAD(+) biosynthesis; quinolinate from L-kynurenine: step 3/3. Functionally, catalyzes the oxidative ring opening of 3-hydroxyanthranilate to 2-amino-3-carboxymuconate semialdehyde, which spontaneously cyclizes to quinolinate. The sequence is that of 3-hydroxyanthranilate 3,4-dioxygenase from Paraburkholderia phytofirmans (strain DSM 17436 / LMG 22146 / PsJN) (Burkholderia phytofirmans).